The following is a 330-amino-acid chain: Putative glycosyltransferase HI_0258 (330 aa).

Residues 1 to 31 show a composition bias toward basic and acidic residues; that stretch reads MTDRQTDRQTDRQTDRQTDRQTDRQTDRQTD. The interval 1–32 is disordered; sequence MTDRQTDRQTDRQTDRQTDRQTDRQTDRQTDG. UDP is bound by residues 44–49 and 140–141; these read SSDHYY and DV. Mn(2+) contacts are provided by Asp-140, Asp-142, and His-270. Residue 270–276 coordinates UDP; the sequence is HYCGPNK.

The protein belongs to the glycosyltransferase 8 family.

In Haemophilus influenzae (strain ATCC 51907 / DSM 11121 / KW20 / Rd), this protein is Putative glycosyltransferase HI_0258.